Consider the following 386-residue polypeptide: Acyl-lipid omega-3 desaturase (cytochrome b5), endoplasmic reticulum (386 aa).

The tract at residues 1-30 (MVVAMDQRTNVNGDPGAGDRKKEERFDPSA) is disordered. Basic and acidic residues predominate over residues 17–27 (AGDRKKEERFD). The helical transmembrane segment at 63–83 (IIAVAALAIAAVYVDSWFLWP) threads the bilayer. The Histidine box-1 signature appears at 101 to 105 (HDCGH). Positions 137 to 141 (HRTHH) match the Histidine box-2 motif. 2 helical membrane passes run 220 to 240 (WSIMFVSLIALSFVFGPLAVL) and 242 to 262 (VYGVPYIIFVMWLDAVTYLHH). The Histidine box-3 motif lies at 304-308 (HVIHH).

Belongs to the fatty acid desaturase type 1 family. Abundant in leaves and seedlings. Barely detectable in root tissue.

Its subcellular location is the endoplasmic reticulum membrane. The catalysed reaction is a (9Z,12Z)-octadecadienoyl-containing glycerolipid + 2 Fe(II)-[cytochrome b5] + O2 + 2 H(+) = (9Z,12Z,15Z)-octadecatrienoyl-containing glycerolipid + 2 Fe(III)-[cytochrome b5] + 2 H2O. The protein operates within lipid metabolism; polyunsaturated fatty acid biosynthesis. Microsomal (ER) omega-3 fatty acid desaturase introduces the third double bond in the biosynthesis of 18:3 fatty acids, important constituents of plant membranes. It is thought to use cytochrome b5 as an electron donor and to act on fatty acids esterified to phosphatidylcholine and, possibly, other phospholipids. The polypeptide is Acyl-lipid omega-3 desaturase (cytochrome b5), endoplasmic reticulum (Arabidopsis thaliana (Mouse-ear cress)).